The following is a 175-amino-acid chain: MTTICAVKHNGKTAIAGDGQVTLGEKVIMKGSARKVRRIYNDKVAVGFAGGVADAINLEEKFENKLNEYSGNLERAAVELAQEWRGDRTLQKLEAMLIVIDKDNLLIVSGSGEVIVPDNGVLAIGSGGNYAQAAAVALSEYSKDMSAGEIAKAALNIAADIDIFTNHNIIVEELA.

Residue threonine 2 is part of the active site. Na(+) contacts are provided by alanine 159, aspartate 162, and threonine 165.

This sequence belongs to the peptidase T1B family. HslV subfamily. As to quaternary structure, a double ring-shaped homohexamer of HslV is capped on each side by a ring-shaped HslU homohexamer. The assembly of the HslU/HslV complex is dependent on binding of ATP.

It is found in the cytoplasm. It carries out the reaction ATP-dependent cleavage of peptide bonds with broad specificity.. Its activity is regulated as follows. Allosterically activated by HslU binding. Its function is as follows. Protease subunit of a proteasome-like degradation complex believed to be a general protein degrading machinery. This chain is ATP-dependent protease subunit HslV, found in Ligilactobacillus salivarius (strain UCC118) (Lactobacillus salivarius).